The sequence spans 1132 residues: Rho GTPase-activating protein gacE (1132 aa).

The Rho-GAP domain occupies 76 to 262; the sequence is LEMNKILKSE…FLISNYLNVF (187 aa). Disordered stretches follow at residues 279–354 and 472–517; these read NELL…SSPI and NSTT…SLIN. The segment covering 281–301 has biased composition (low complexity); the sequence is LLNNNNNNNNVIMPTTTTTTT. Residues 302–311 show a composition bias toward polar residues; the sequence is SASSSILPTD. Low complexity-rich tracts occupy residues 328-354, 473-498, and 507-517; these read SIPLSSIGSSSTSPIISPSSSSSSSPI, STTTTTTSTSTSTSTSTSTSTSSTTT, and SNSASNNSLIN.

The protein localises to the cytoplasm. Rho GTPase-activating protein involved in the signal transduction pathway. This chain is Rho GTPase-activating protein gacE (gacE), found in Dictyostelium discoideum (Social amoeba).